The chain runs to 554 residues: Urocanate hydratase (554 aa).

NAD(+) contacts are provided by residues Gly50–Gly51, Gln128, Gly174–Gly176, Glu194, Arg199, Asn240–Ala241, Gln261–His265, Tyr271–Ile272, and Tyr320. Residue Cys408 is part of the active site. NAD(+) is bound at residue Gly490.

It belongs to the urocanase family. The cofactor is NAD(+).

Its subcellular location is the cytoplasm. It carries out the reaction 4-imidazolone-5-propanoate = trans-urocanate + H2O. The protein operates within amino-acid degradation; L-histidine degradation into L-glutamate; N-formimidoyl-L-glutamate from L-histidine: step 2/3. In terms of biological role, catalyzes the conversion of urocanate to 4-imidazolone-5-propionate. This Rubrobacter xylanophilus (strain DSM 9941 / JCM 11954 / NBRC 16129 / PRD-1) protein is Urocanate hydratase.